The primary structure comprises 242 residues: Pyridoxine 5'-phosphate synthase (242 aa).

A 3-amino-2-oxopropyl phosphate-binding site is contributed by asparagine 8. 10–11 (DH) provides a ligand contact to 1-deoxy-D-xylulose 5-phosphate. Arginine 19 lines the 3-amino-2-oxopropyl phosphate pocket. Residue histidine 44 is the Proton acceptor of the active site. 1-deoxy-D-xylulose 5-phosphate is bound by residues arginine 46 and histidine 51. The active-site Proton acceptor is glutamate 71. Residue threonine 101 coordinates 1-deoxy-D-xylulose 5-phosphate. Histidine 193 serves as the catalytic Proton donor. Residues glycine 194 and 215–216 (GF) contribute to the 3-amino-2-oxopropyl phosphate site.

The protein belongs to the PNP synthase family. In terms of assembly, homooctamer; tetramer of dimers.

Its subcellular location is the cytoplasm. It carries out the reaction 3-amino-2-oxopropyl phosphate + 1-deoxy-D-xylulose 5-phosphate = pyridoxine 5'-phosphate + phosphate + 2 H2O + H(+). It functions in the pathway cofactor biosynthesis; pyridoxine 5'-phosphate biosynthesis; pyridoxine 5'-phosphate from D-erythrose 4-phosphate: step 5/5. Functionally, catalyzes the complicated ring closure reaction between the two acyclic compounds 1-deoxy-D-xylulose-5-phosphate (DXP) and 3-amino-2-oxopropyl phosphate (1-amino-acetone-3-phosphate or AAP) to form pyridoxine 5'-phosphate (PNP) and inorganic phosphate. The polypeptide is Pyridoxine 5'-phosphate synthase (Elusimicrobium minutum (strain Pei191)).